The following is a 383-amino-acid chain: Dual-specificity RNA methyltransferase RlmN (383 aa).

Glu94 acts as the Proton acceptor in catalysis. Residues 100-339 (DGDRATLCVS…VTVRRTRGDD (240 aa)) enclose the Radical SAM core domain. Cys107 and Cys344 form a disulfide bridge. [4Fe-4S] cluster is bound by residues Cys114, Cys118, and Cys121. S-adenosyl-L-methionine contacts are provided by residues 168–169 (GE), Ser200, 222–224 (SLH), and Asn301. Cys344 (S-methylcysteine intermediate) is an active-site residue.

It belongs to the radical SAM superfamily. RlmN family. The cofactor is [4Fe-4S] cluster.

It is found in the cytoplasm. The catalysed reaction is adenosine(2503) in 23S rRNA + 2 reduced [2Fe-2S]-[ferredoxin] + 2 S-adenosyl-L-methionine = 2-methyladenosine(2503) in 23S rRNA + 5'-deoxyadenosine + L-methionine + 2 oxidized [2Fe-2S]-[ferredoxin] + S-adenosyl-L-homocysteine. It catalyses the reaction adenosine(37) in tRNA + 2 reduced [2Fe-2S]-[ferredoxin] + 2 S-adenosyl-L-methionine = 2-methyladenosine(37) in tRNA + 5'-deoxyadenosine + L-methionine + 2 oxidized [2Fe-2S]-[ferredoxin] + S-adenosyl-L-homocysteine. Its function is as follows. Specifically methylates position 2 of adenine 2503 in 23S rRNA and position 2 of adenine 37 in tRNAs. m2A2503 modification seems to play a crucial role in the proofreading step occurring at the peptidyl transferase center and thus would serve to optimize ribosomal fidelity. This is Dual-specificity RNA methyltransferase RlmN from Aliivibrio salmonicida (strain LFI1238) (Vibrio salmonicida (strain LFI1238)).